A 382-amino-acid polypeptide reads, in one-letter code: D-galactonate dehydratase (382 aa).

Residue aspartate 183 coordinates Mg(2+). Histidine 185 acts as the Proton donor in catalysis. Mg(2+) contacts are provided by glutamate 209 and glutamate 235. The Proton acceptor role is filled by histidine 285.

This sequence belongs to the mandelate racemase/muconate lactonizing enzyme family. GalD subfamily. Mg(2+) serves as cofactor.

The enzyme catalyses D-galactonate = 2-dehydro-3-deoxy-D-galactonate + H2O. Its pathway is carbohydrate acid metabolism; D-galactonate degradation; D-glyceraldehyde 3-phosphate and pyruvate from D-galactonate: step 1/3. Functionally, catalyzes the dehydration of D-galactonate to 2-keto-3-deoxy-D-galactonate. This is D-galactonate dehydratase from Salmonella gallinarum (strain 287/91 / NCTC 13346).